Here is a 185-residue protein sequence, read N- to C-terminus: Transcription termination/antitermination protein NusG (185 aa).

Residues 134–162 enclose the KOW domain; the sequence is PGQMVRVIDGPFNDFDGLVEEVNYEKNRL.

It belongs to the NusG family.

Its function is as follows. Participates in transcription elongation, termination and antitermination. This is Transcription termination/antitermination protein NusG from Xylella fastidiosa (strain 9a5c).